We begin with the raw amino-acid sequence, 217 residues long: Translation initiation factor 6 (217 aa).

It belongs to the eIF-6 family.

In terms of biological role, binds to the 50S ribosomal subunit and prevents its association with the 30S ribosomal subunit to form the 70S initiation complex. In Methanococcoides burtonii (strain DSM 6242 / NBRC 107633 / OCM 468 / ACE-M), this protein is Translation initiation factor 6.